The following is a 266-amino-acid chain: Putative carbamate hydrolase RutD (266 aa).

Residues 15–239 (PVVVLSAGLG…RVEMPWGGHA (225 aa)) form the AB hydrolase-1 domain.

It belongs to the AB hydrolase superfamily. Hydrolase RutD family.

The enzyme catalyses carbamate + 2 H(+) = NH4(+) + CO2. In terms of biological role, involved in pyrimidine catabolism. May facilitate the hydrolysis of carbamate, a reaction that can also occur spontaneously. This is Putative carbamate hydrolase RutD from Klebsiella variicola (strain At-22).